The chain runs to 126 residues: Large ribosomal subunit protein bL17 (126 aa).

The protein belongs to the bacterial ribosomal protein bL17 family. Part of the 50S ribosomal subunit. Contacts protein L32.

The protein is Large ribosomal subunit protein bL17 of Coxiella burnetii (strain CbuG_Q212) (Coxiella burnetii (strain Q212)).